Here is a 615-residue protein sequence, read N- to C-terminus: 1-deoxy-D-xylulose-5-phosphate synthase (615 aa).

Thiamine diphosphate contacts are provided by residues His72 and 111–113; that span reads GHS. Asp142 contacts Mg(2+). Thiamine diphosphate is bound by residues 143-144, Asn171, Tyr278, and Glu360; that span reads GA. Asn171 provides a ligand contact to Mg(2+).

It belongs to the transketolase family. DXPS subfamily. Homodimer. It depends on Mg(2+) as a cofactor. The cofactor is thiamine diphosphate.

It catalyses the reaction D-glyceraldehyde 3-phosphate + pyruvate + H(+) = 1-deoxy-D-xylulose 5-phosphate + CO2. It participates in metabolic intermediate biosynthesis; 1-deoxy-D-xylulose 5-phosphate biosynthesis; 1-deoxy-D-xylulose 5-phosphate from D-glyceraldehyde 3-phosphate and pyruvate: step 1/1. Catalyzes the acyloin condensation reaction between C atoms 2 and 3 of pyruvate and glyceraldehyde 3-phosphate to yield 1-deoxy-D-xylulose-5-phosphate (DXP). This chain is 1-deoxy-D-xylulose-5-phosphate synthase, found in Campylobacter jejuni (strain RM1221).